The sequence spans 491 residues: NADH-quinone oxidoreductase subunit N (491 aa).

The next 14 helical transmembrane spans lie at 6–26 (TLAP…INWI), 37–57 (VAYP…GMNA), 69–89 (LVVI…GLFV), 103–123 (MFAG…IVMI), 128–148 (FLTL…LVAL), 163–183 (FVLG…MYGA), 206–226 (LAFG…AAPF), 238–258 (PTAV…ALFI), 273–293 (QMML…TAIV), 301–321 (LAYS…SGVV), 335–355 (AMFY…IILL), 379–399 (FAFL…TVGF), 413–433 (GMTW…FYYL), and 458–478 (SMLS…AALM).

This sequence belongs to the complex I subunit 2 family. In terms of assembly, NDH-1 is composed of 14 different subunits. Subunits NuoA, H, J, K, L, M, N constitute the membrane sector of the complex.

The protein resides in the cell inner membrane. It catalyses the reaction a quinone + NADH + 5 H(+)(in) = a quinol + NAD(+) + 4 H(+)(out). Its function is as follows. NDH-1 shuttles electrons from NADH, via FMN and iron-sulfur (Fe-S) centers, to quinones in the respiratory chain. The immediate electron acceptor for the enzyme in this species is believed to be ubiquinone. Couples the redox reaction to proton translocation (for every two electrons transferred, four hydrogen ions are translocated across the cytoplasmic membrane), and thus conserves the redox energy in a proton gradient. In Cupriavidus taiwanensis (strain DSM 17343 / BCRC 17206 / CCUG 44338 / CIP 107171 / LMG 19424 / R1) (Ralstonia taiwanensis (strain LMG 19424)), this protein is NADH-quinone oxidoreductase subunit N.